The sequence spans 372 residues: Cell division protein FtsZ 1 (372 aa).

GTP-binding positions include 51–55, 138–140, glutamate 169, arginine 173, and aspartate 216; these read GAGCN and GTG. The segment at 352 to 372 is disordered; the sequence is EETPAPSEEETTPVKIDIPEL.

Belongs to the FtsZ family. As to quaternary structure, homodimer. Polymerizes to form a dynamic ring structure in a strictly GTP-dependent manner. Interacts directly with several other division proteins.

The protein resides in the cytoplasm. Essential cell division protein that forms a contractile ring structure (Z ring) at the future cell division site. The regulation of the ring assembly controls the timing and the location of cell division. One of the functions of the FtsZ ring is to recruit other cell division proteins to the septum to produce a new cell wall between the dividing cells. Binds GTP and shows GTPase activity. This chain is Cell division protein FtsZ 1, found in Pyrococcus horikoshii (strain ATCC 700860 / DSM 12428 / JCM 9974 / NBRC 100139 / OT-3).